Consider the following 312-residue polypeptide: Malate dehydrogenase (312 aa).

NAD(+) is bound by residues 12–17 (GAGFTG) and aspartate 36. The substrate site is built by arginine 87 and arginine 93. NAD(+) contacts are provided by residues asparagine 100 and 123–125 (LTN). Asparagine 125 is a binding site for substrate. Serine 149 carries the phosphoserine modification. A substrate-binding site is contributed by arginine 156. Histidine 180 functions as the Proton acceptor in the catalytic mechanism.

The protein belongs to the LDH/MDH superfamily. MDH type 3 family.

The enzyme catalyses (S)-malate + NAD(+) = oxaloacetate + NADH + H(+). Catalyzes the reversible oxidation of malate to oxaloacetate. This chain is Malate dehydrogenase, found in Geobacillus sp. (strain WCH70).